The sequence spans 271 residues: 3-methyl-2-oxobutanoate hydroxymethyltransferase (271 aa).

Mg(2+)-binding residues include D51 and D90. Residues 51–52, D90, and K118 contribute to the 3-methyl-2-oxobutanoate site; that span reads DS. E120 provides a ligand contact to Mg(2+). Catalysis depends on E186, which acts as the Proton acceptor.

This sequence belongs to the PanB family. As to quaternary structure, homodecamer; pentamer of dimers. The cofactor is Mg(2+).

It is found in the cytoplasm. The enzyme catalyses 3-methyl-2-oxobutanoate + (6R)-5,10-methylene-5,6,7,8-tetrahydrofolate + H2O = 2-dehydropantoate + (6S)-5,6,7,8-tetrahydrofolate. It functions in the pathway cofactor biosynthesis; (R)-pantothenate biosynthesis; (R)-pantoate from 3-methyl-2-oxobutanoate: step 1/2. Catalyzes the reversible reaction in which hydroxymethyl group from 5,10-methylenetetrahydrofolate is transferred onto alpha-ketoisovalerate to form ketopantoate. This Xanthomonas campestris pv. campestris (strain 8004) protein is 3-methyl-2-oxobutanoate hydroxymethyltransferase.